Consider the following 469-residue polypeptide: DNA-binding transcriptional regulator NtrC (469 aa).

Residues 5–119 (IVWVVDDDSS…EAVALVERAI (115 aa)) form the Response regulatory domain. At D54 the chain carries 4-aspartylphosphate. Residues 140–369 (IIGEAPAMQD…LENTCRWLTV (230 aa)) form the Sigma-54 factor interaction domain. ATP-binding positions include 168 to 175 (GESGTGKE) and 231 to 240 (ADGGTLFLDE). A DNA-binding region (H-T-H motif) is located at residues 445–464 (KQEAARLLGWGRNTLTRKLK).

Phosphorylated and dephosphorylated by NtrB.

The protein resides in the cytoplasm. In terms of biological role, member of the two-component regulatory system NtrB/NtrC, which controls expression of the nitrogen-regulated (ntr) genes in response to nitrogen limitation. Phosphorylated NtrC binds directly to DNA and stimulates the formation of open promoter-sigma54-RNA polymerase complexes. This Escherichia coli O157:H7 protein is DNA-binding transcriptional regulator NtrC (glnG).